The primary structure comprises 387 residues: Cysteine desulfurase IscS (387 aa).

Residues 73–74, asparagine 155, glutamine 183, and 203–205 each bind pyridoxal 5'-phosphate; these read AT and SAH. Lysine 206 carries the post-translational modification N6-(pyridoxal phosphate)lysine. Threonine 241 is a pyridoxal 5'-phosphate binding site. Cysteine 328 (cysteine persulfide intermediate) is an active-site residue. Cysteine 328 serves as a coordination point for [2Fe-2S] cluster.

The protein belongs to the class-V pyridoxal-phosphate-dependent aminotransferase family. NifS/IscS subfamily. As to quaternary structure, homodimer. Forms a heterotetramer with IscU, interacts with other sulfur acceptors. Pyridoxal 5'-phosphate is required as a cofactor.

The protein localises to the cytoplasm. The catalysed reaction is (sulfur carrier)-H + L-cysteine = (sulfur carrier)-SH + L-alanine. It participates in cofactor biosynthesis; iron-sulfur cluster biosynthesis. Its function is as follows. Master enzyme that delivers sulfur to a number of partners involved in Fe-S cluster assembly, tRNA modification or cofactor biosynthesis. Catalyzes the removal of elemental sulfur atoms from cysteine to produce alanine. Functions as a sulfur delivery protein for Fe-S cluster synthesis onto IscU, an Fe-S scaffold assembly protein, as well as other S acceptor proteins. In Helicobacter pylori (strain P12), this protein is Cysteine desulfurase IscS.